Here is a 741-residue protein sequence, read N- to C-terminus: Isocitrate dehydrogenase [NADP] (741 aa).

Residues Asn-85 and Ser-87 each contribute to the NADP(+) site. D-threo-isocitrate contacts are provided by Ser-132, Asn-135, Arg-139, Arg-145, and Lys-255. Asn-135 is a binding site for NADP(+). Asp-350 provides a ligand contact to Mn(2+). Residues Tyr-420 and Arg-547 each coordinate D-threo-isocitrate. Asp-548 is a Mn(2+) binding site. NADP(+)-binding residues include Ser-585, His-589, Arg-600, Asp-602, and Arg-649.

Belongs to the monomeric-type IDH family. In terms of assembly, monomer. The cofactor is Mg(2+). It depends on Mn(2+) as a cofactor.

Its subcellular location is the cytoplasm. It carries out the reaction D-threo-isocitrate + NADP(+) = 2-oxoglutarate + CO2 + NADPH. Its activity is regulated as follows. Activity is inhibited in the presence of Ca(2+). Catalyzes the oxidative decarboxylation of isocitrate to 2-oxoglutarate and carbon dioxide with the concomitant reduction of NADP(+). This is Isocitrate dehydrogenase [NADP] from Azotobacter vinelandii.